The following is a 206-amino-acid chain: MSIKKQGLLIVISGPSGAGKGTICKALIEKEKDLKLSISATTRQPRAGEVDGKNYFFKSEEEFKRMIEEDAFLEWAKVYDHYYGTPKEFVLKNLEEGNDVVLEIDIQGALKVKEKFPEGVFIFILPPSMEELRNRIKKRGTESEEEIIKRFKSAYEELNYVSKYNYVVINDDVDRAVEKIRAIIIAEKCRVDRNKDLYLKIREESV.

Positions 7–185 (GLLIVISGPS…AVEKIRAIII (179 aa)) constitute a Guanylate kinase-like domain. 14 to 21 (GPSGAGKG) is an ATP binding site.

It belongs to the guanylate kinase family.

Its subcellular location is the cytoplasm. The catalysed reaction is GMP + ATP = GDP + ADP. Functionally, essential for recycling GMP and indirectly, cGMP. This chain is Guanylate kinase, found in Caldanaerobacter subterraneus subsp. tengcongensis (strain DSM 15242 / JCM 11007 / NBRC 100824 / MB4) (Thermoanaerobacter tengcongensis).